The primary structure comprises 300 residues: Ribosomal protein L11 methyltransferase (300 aa).

Residues T152, G173, D195, and N234 each coordinate S-adenosyl-L-methionine.

The protein belongs to the methyltransferase superfamily. PrmA family.

The protein resides in the cytoplasm. The catalysed reaction is L-lysyl-[protein] + 3 S-adenosyl-L-methionine = N(6),N(6),N(6)-trimethyl-L-lysyl-[protein] + 3 S-adenosyl-L-homocysteine + 3 H(+). Its function is as follows. Methylates ribosomal protein L11. This Burkholderia pseudomallei (strain K96243) protein is Ribosomal protein L11 methyltransferase.